Consider the following 493-residue polypeptide: Glycogen synthase 1 (493 aa).

Lysine 15 serves as a coordination point for ADP-alpha-D-glucose.

It belongs to the glycosyltransferase 1 family. Bacterial/plant glycogen synthase subfamily.

It carries out the reaction [(1-&gt;4)-alpha-D-glucosyl](n) + ADP-alpha-D-glucose = [(1-&gt;4)-alpha-D-glucosyl](n+1) + ADP + H(+). It participates in glycan biosynthesis; glycogen biosynthesis. Its function is as follows. Synthesizes alpha-1,4-glucan chains using ADP-glucose. The chain is Glycogen synthase 1 from Methylococcus capsulatus (strain ATCC 33009 / NCIMB 11132 / Bath).